Here is a 566-residue protein sequence, read N- to C-terminus: Good for full DBP5 activity protein 2 (566 aa).

Polar residues predominate over residues 1–16; sequence MQVQKMVRDNSNNGSD. The interval 1–41 is disordered; that stretch reads MQVQKMVRDNSNNGSDKSVHWERRNNNGAGPRYRSRSGNTG.

In terms of biological role, high-copy suppressor of DBP5 mutation. In Saccharomyces cerevisiae (strain ATCC 204508 / S288c) (Baker's yeast), this protein is Good for full DBP5 activity protein 2 (GFD2).